Reading from the N-terminus, the 490-residue chain is Protein nucleotidyltransferase YdiU (490 aa).

Glycine 94, glycine 96, arginine 97, lysine 117, aspartate 129, glycine 130, arginine 180, and arginine 187 together coordinate ATP. The active-site Proton acceptor is aspartate 256. The Mg(2+) site is built by asparagine 257 and aspartate 266. Aspartate 266 contributes to the ATP binding site.

The protein belongs to the SELO family. Mg(2+) is required as a cofactor. It depends on Mn(2+) as a cofactor.

It carries out the reaction L-seryl-[protein] + ATP = 3-O-(5'-adenylyl)-L-seryl-[protein] + diphosphate. The catalysed reaction is L-threonyl-[protein] + ATP = 3-O-(5'-adenylyl)-L-threonyl-[protein] + diphosphate. It catalyses the reaction L-tyrosyl-[protein] + ATP = O-(5'-adenylyl)-L-tyrosyl-[protein] + diphosphate. The enzyme catalyses L-histidyl-[protein] + UTP = N(tele)-(5'-uridylyl)-L-histidyl-[protein] + diphosphate. It carries out the reaction L-seryl-[protein] + UTP = O-(5'-uridylyl)-L-seryl-[protein] + diphosphate. The catalysed reaction is L-tyrosyl-[protein] + UTP = O-(5'-uridylyl)-L-tyrosyl-[protein] + diphosphate. Functionally, nucleotidyltransferase involved in the post-translational modification of proteins. It can catalyze the addition of adenosine monophosphate (AMP) or uridine monophosphate (UMP) to a protein, resulting in modifications known as AMPylation and UMPylation. The sequence is that of Protein nucleotidyltransferase YdiU from Clostridium perfringens (strain SM101 / Type A).